Consider the following 370-residue polypeptide: Adaptive-response sensory kinase SasA (370 aa).

In terms of domain architecture, Histidine kinase spans 152 to 365 (MVAHELRTPL…CFYLTVPVWQ (214 aa)). A Phosphohistidine; by autocatalysis modification is found at H155.

In terms of assembly, homooligomerizes. Interacts with KaiC. Participates in the KaiBC complex, whose core is composed of a KaiC homohexamer and 6 KaiB.

The catalysed reaction is ATP + protein L-histidine = ADP + protein N-phospho-L-histidine.. Functionally, member of the two-component regulatory system SasA/RpaA involved in genome-wide circadian gene expression. One of several clock output pathways. Participates in the Kai clock protein complex, the main circadian regulator in cyanobacteria, via its interaction with KaiC. KaiC enhances the autophosphorylation activity of SasA, which then transfers its phosphate group to RpaA to activate it. In addition to its output function, recruits fold-shifted KaiB (KaiB(fs)) to KaiC to cooperatively form the KaiB(6):KaiC(6) complex (independent of SasA kinase activity). Required for robustness of the circadian rhythm of gene expression and is involved in clock output, also required for adaptation to light/dark cycles. The chain is Adaptive-response sensory kinase SasA from Prochlorococcus marinus (strain MIT 9313).